A 38-amino-acid polypeptide reads, in one-letter code: Cytochrome b559 subunit beta (38 aa).

Residues 13–29 (WLAVHALAVPTVFFLGS) traverse the membrane as a helical segment. Histidine 17 provides a ligand contact to heme.

The protein belongs to the PsbE/PsbF family. In terms of assembly, heterodimer of an alpha subunit and a beta subunit. PSII is composed of 1 copy each of membrane proteins PsbA, PsbB, PsbC, PsbD, PsbE, PsbF, PsbH, PsbI, PsbJ, PsbK, PsbL, PsbM, PsbT, PsbX, PsbY, PsbZ, Psb30/Ycf12, at least 3 peripheral proteins of the oxygen-evolving complex and a large number of cofactors. It forms dimeric complexes. Heme b is required as a cofactor.

It localises to the plastid. The protein resides in the chloroplast thylakoid membrane. In terms of biological role, this b-type cytochrome is tightly associated with the reaction center of photosystem II (PSII). PSII is a light-driven water:plastoquinone oxidoreductase that uses light energy to abstract electrons from H(2)O, generating O(2) and a proton gradient subsequently used for ATP formation. It consists of a core antenna complex that captures photons, and an electron transfer chain that converts photonic excitation into a charge separation. This chain is Cytochrome b559 subunit beta, found in Ostreococcus tauri.